Consider the following 461-residue polypeptide: Argininosuccinate lyase (461 aa).

This sequence belongs to the lyase 1 family. Argininosuccinate lyase subfamily.

Its subcellular location is the cytoplasm. It carries out the reaction 2-(N(omega)-L-arginino)succinate = fumarate + L-arginine. Its pathway is amino-acid biosynthesis; L-arginine biosynthesis; L-arginine from L-ornithine and carbamoyl phosphate: step 3/3. In Trichormus variabilis (strain ATCC 29413 / PCC 7937) (Anabaena variabilis), this protein is Argininosuccinate lyase.